A 500-amino-acid polypeptide reads, in one-letter code: MKTFLPSKFIVDRIEDRCIKCKVCITQCSFDTHYYDEDDDQIKVRNQNCVGCHRCVTFCPTNALVVRNNPLEYRQNANWTPEMIEDIFKQAETGGVLLTGMGMDKAKPIYWDKLLINASQVTNPSIDPLREPMELTTYLGRRPDKAAFDNCGNVEENITPLVKIDVPVMFSAMSYGAISLNVHRSLAQAAKNMGTMWNTGEGGLHSSLMEFKDNTIVQVASGRYGVQNDYLNSGRIVEIKIGQGAKPGIGGHLPGEKVSADVSLTRMIPMGTDAISPAPQHDIYSIEDLSQLIYALKEATHYRVPISVKIAAVHNVSAIASGIVRAGADIVTIDGMRGATGAAPKVIRDNVGIPIELALAAVDSRLREEGIRNQASLVISGGIRNSGDVFKAIALGADAVNIGTAALVALGCHLCQQCHTGKCAWGICTSDLALTKRINPEIGAKRLTNLLRGWSLEIKDMLGGLGVNAIESLRGNRLHLRGVGLSAEELKILGVRAAGE.

2 4Fe-4S ferredoxin-type domains span residues 7–38 and 40–69; these read SKFI…YDED and DQIK…VRNN. 8 residues coordinate [4Fe-4S] cluster: cysteine 18, cysteine 21, cysteine 24, cysteine 28, cysteine 49, cysteine 52, cysteine 55, and cysteine 59.

This sequence belongs to the glutamate synthase family. Requires FMN as cofactor.

The enzyme catalyses 2 L-glutamate + NADP(+) = L-glutamine + 2-oxoglutarate + NADPH + H(+). In Dehalococcoides mccartyi (strain ATCC BAA-2266 / KCTC 15142 / 195) (Dehalococcoides ethenogenes (strain 195)), this protein is Archaeal-type glutamate synthase [NADPH].